An 84-amino-acid polypeptide reads, in one-letter code: Putative membrane protein insertion efficiency factor (84 aa).

It belongs to the UPF0161 family.

Its subcellular location is the cell membrane. Functionally, could be involved in insertion of integral membrane proteins into the membrane. The sequence is that of Putative membrane protein insertion efficiency factor from Staphylococcus carnosus (strain TM300).